A 218-amino-acid polypeptide reads, in one-letter code: Thiamine-phosphate synthase (218 aa).

4-amino-2-methyl-5-(diphosphooxymethyl)pyrimidine is bound by residues 45 to 49 (QYREK) and Asn77. Residues Asp78 and Asp97 each contribute to the Mg(2+) site. A 4-amino-2-methyl-5-(diphosphooxymethyl)pyrimidine-binding site is contributed by Ser116. A 2-[(2R,5Z)-2-carboxy-4-methylthiazol-5(2H)-ylidene]ethyl phosphate-binding site is contributed by 142 to 144 (TKT). Lys145 contributes to the 4-amino-2-methyl-5-(diphosphooxymethyl)pyrimidine binding site. 2-[(2R,5Z)-2-carboxy-4-methylthiazol-5(2H)-ylidene]ethyl phosphate is bound by residues Gly173 and 193-194 (VT).

Belongs to the thiamine-phosphate synthase family. Mg(2+) is required as a cofactor.

The catalysed reaction is 2-[(2R,5Z)-2-carboxy-4-methylthiazol-5(2H)-ylidene]ethyl phosphate + 4-amino-2-methyl-5-(diphosphooxymethyl)pyrimidine + 2 H(+) = thiamine phosphate + CO2 + diphosphate. The enzyme catalyses 2-(2-carboxy-4-methylthiazol-5-yl)ethyl phosphate + 4-amino-2-methyl-5-(diphosphooxymethyl)pyrimidine + 2 H(+) = thiamine phosphate + CO2 + diphosphate. It carries out the reaction 4-methyl-5-(2-phosphooxyethyl)-thiazole + 4-amino-2-methyl-5-(diphosphooxymethyl)pyrimidine + H(+) = thiamine phosphate + diphosphate. Its pathway is cofactor biosynthesis; thiamine diphosphate biosynthesis; thiamine phosphate from 4-amino-2-methyl-5-diphosphomethylpyrimidine and 4-methyl-5-(2-phosphoethyl)-thiazole: step 1/1. Its function is as follows. Condenses 4-methyl-5-(beta-hydroxyethyl)thiazole monophosphate (THZ-P) and 2-methyl-4-amino-5-hydroxymethyl pyrimidine pyrophosphate (HMP-PP) to form thiamine monophosphate (TMP). In Pelotomaculum thermopropionicum (strain DSM 13744 / JCM 10971 / SI), this protein is Thiamine-phosphate synthase.